The following is a 474-amino-acid chain: Glycogen synthase (474 aa).

Residue Lys-15 coordinates ADP-alpha-D-glucose.

It belongs to the glycosyltransferase 1 family. Bacterial/plant glycogen synthase subfamily.

It catalyses the reaction [(1-&gt;4)-alpha-D-glucosyl](n) + ADP-alpha-D-glucose = [(1-&gt;4)-alpha-D-glucosyl](n+1) + ADP + H(+). It participates in glycan biosynthesis; glycogen biosynthesis. Its function is as follows. Synthesizes alpha-1,4-glucan chains using ADP-glucose. The polypeptide is Glycogen synthase (Chlamydia trachomatis serovar D (strain ATCC VR-885 / DSM 19411 / UW-3/Cx)).